The sequence spans 227 residues: Uracil-DNA glycosylase (227 aa).

The Proton acceptor role is filled by aspartate 65.

This sequence belongs to the uracil-DNA glycosylase (UDG) superfamily. UNG family.

It is found in the cytoplasm. It catalyses the reaction Hydrolyzes single-stranded DNA or mismatched double-stranded DNA and polynucleotides, releasing free uracil.. Excises uracil residues from the DNA which can arise as a result of misincorporation of dUMP residues by DNA polymerase or due to deamination of cytosine. The protein is Uracil-DNA glycosylase of Buchnera aphidicola subsp. Cinara cedri (strain Cc).